The following is a 170-amino-acid chain: Large ribosomal subunit protein uL10 (170 aa).

The protein belongs to the universal ribosomal protein uL10 family. Part of the ribosomal stalk of the 50S ribosomal subunit. The N-terminus interacts with L11 and the large rRNA to form the base of the stalk. The C-terminus forms an elongated spine to which L12 dimers bind in a sequential fashion forming a multimeric L10(L12)X complex.

In terms of biological role, forms part of the ribosomal stalk, playing a central role in the interaction of the ribosome with GTP-bound translation factors. This is Large ribosomal subunit protein uL10 from Jannaschia sp. (strain CCS1).